A 159-amino-acid chain; its full sequence is MPKTKHWHYSIPPEELDDERTAKAFIRELRISPKHAREICRAIRGMPLDRAKEFLRRVIRKEEAVPFRKHKKKVPHRRQIRPGWDAGRFPEKAAREILRVLEHAEANAEYKGLDTDRLYIKHIAAHKGRVIRGWIPRAFGRATPFNTPTTHIEVILEER.

This sequence belongs to the universal ribosomal protein uL22 family. As to quaternary structure, part of the 50S ribosomal subunit.

Its function is as follows. This protein binds specifically to 23S rRNA. It makes multiple contacts with different domains of the 23S rRNA in the assembled 50S subunit and ribosome. Functionally, the globular domain of the protein is located near the polypeptide exit tunnel on the outside of the subunit, while an extended beta-hairpin is found that lines the wall of the exit tunnel in the center of the 70S ribosome. In Methanopyrus kandleri (strain AV19 / DSM 6324 / JCM 9639 / NBRC 100938), this protein is Large ribosomal subunit protein uL22.